Here is a 491-residue protein sequence, read N- to C-terminus: Cytochrome P450 2H1 (491 aa).

Heme is bound at residue Cys436.

The protein belongs to the cytochrome P450 family. The cofactor is heme. As to expression, expressed in liver.

It localises to the endoplasmic reticulum membrane. Its subcellular location is the microsome membrane. The catalysed reaction is an organic molecule + reduced [NADPH--hemoprotein reductase] + O2 = an alcohol + oxidized [NADPH--hemoprotein reductase] + H2O + H(+). Cytochromes P450 are a group of heme-thiolate monooxygenases. In liver microsomes, this enzyme is involved in an NADPH-dependent electron transport pathway. It oxidizes a variety of structurally unrelated compounds, including steroids, fatty acids, and xenobiotics. This chain is Cytochrome P450 2H1 (CYP2H1), found in Gallus gallus (Chicken).